The following is a 468-amino-acid chain: Putative magnesium transporter MRS2-G (468 aa).

Disordered regions lie at residues 1 to 76 and 183 to 204; these read MGRR…AGKV and GQPG…QVPR. Composition is skewed to low complexity over residues 14–23 and 31–45; these read ASNASTSSST and RLPS…SSPS. Pro residues predominate over residues 46 to 67; sequence PASPSPPPPSASHPAPPSPPLA. The segment covering 187-201 has biased composition (basic and acidic residues); the sequence is GDDHGEKHDDSHGDQ. Transmembrane regions (helical) follow at residues 402–422 and 437–457; these read LTLT…GAFA and FFWP…IVLL.

The protein belongs to the CorA metal ion transporter (MIT) (TC 1.A.35.5) family. In terms of assembly, interacts with CYCB2-2.

It is found in the membrane. In terms of biological role, putative magnesium transporter. This Oryza sativa subsp. japonica (Rice) protein is Putative magnesium transporter MRS2-G (MRS2-G).